A 289-amino-acid polypeptide reads, in one-letter code: Ribosome-inactivating protein alpha-trichosanthin (289 aa).

A signal peptide spans 1–23; that stretch reads MIRFLVLSLLILTLFLTTPAVEG. The active site involves E183. A propeptide spans 271 to 289 (removed in mature form); that stretch reads AMDDDVPMTQSFGCGSYAI.

This sequence belongs to the ribosome-inactivating protein family. Type 1 RIP subfamily.

The enzyme catalyses Endohydrolysis of the N-glycosidic bond at one specific adenosine on the 28S rRNA.. Its function is as follows. Inactivates eukaryotic 60S ribosomal subunits. The chain is Ribosome-inactivating protein alpha-trichosanthin from Trichosanthes kirilowii (Chinese snake gourd).